The following is a 482-amino-acid chain: Transcription termination/antitermination protein NusA (482 aa).

The 65-residue stretch at 133–197 (NKVVIGYVQQ…NGIEVILSRT (65 aa)) folds into the S1 motif domain. The 147-residue stretch at 300–446 (LHKALVVVSD…NDNDESMEKV (147 aa)) folds into the KH domain.

It belongs to the NusA family. As to quaternary structure, monomer. Binds directly to the core enzyme of the DNA-dependent RNA polymerase and to nascent RNA.

The protein resides in the cytoplasm. In terms of biological role, participates in both transcription termination and antitermination. In Borreliella burgdorferi (strain ATCC 35210 / DSM 4680 / CIP 102532 / B31) (Borrelia burgdorferi), this protein is Transcription termination/antitermination protein NusA.